Reading from the N-terminus, the 174-residue chain is UPF0340 protein SAB1998c (174 aa).

It belongs to the UPF0340 family.

The polypeptide is UPF0340 protein SAB1998c (Staphylococcus aureus (strain bovine RF122 / ET3-1)).